The primary structure comprises 83 residues: Cytochrome b559 subunit alpha (83 aa).

Residues Val-21–Trp-35 form a helical membrane-spanning segment. His-23 serves as a coordination point for heme.

Belongs to the PsbE/PsbF family. Heterodimer of an alpha subunit and a beta subunit. PSII is composed of 1 copy each of membrane proteins PsbA, PsbB, PsbC, PsbD, PsbE, PsbF, PsbH, PsbI, PsbJ, PsbK, PsbL, PsbM, PsbT, PsbX, PsbY, PsbZ, Psb30/Ycf12, at least 3 peripheral proteins of the oxygen-evolving complex and a large number of cofactors. It forms dimeric complexes. Heme b is required as a cofactor.

Its subcellular location is the plastid. The protein localises to the chloroplast thylakoid membrane. Its function is as follows. This b-type cytochrome is tightly associated with the reaction center of photosystem II (PSII). PSII is a light-driven water:plastoquinone oxidoreductase that uses light energy to abstract electrons from H(2)O, generating O(2) and a proton gradient subsequently used for ATP formation. It consists of a core antenna complex that captures photons, and an electron transfer chain that converts photonic excitation into a charge separation. The protein is Cytochrome b559 subunit alpha of Daucus carota (Wild carrot).